The following is a 265-amino-acid chain: uncharacterized protein (265 aa).

Residues 1 to 21 (MAFNNSTIIIIIVIAFAFFLI) traverse the membrane as a helical segment. 2 N-linked (GlcNAc...) asparagine; by host glycosylation sites follow: Asn74 and Asn142.

The protein localises to the host membrane. It is found in the virion. This is an uncharacterized protein from Acanthamoeba polyphaga mimivirus (APMV).